Reading from the N-terminus, the 717-residue chain is Copine family protein 5 (717 aa).

One can recognise a C2 domain in the interval 193-318; the sequence is YLGGIIVSAE…KYGPGSDNVY (126 aa). The VWFA domain occupies 377–567; it reads ELDQRRFDGE…LNKSRIAETA (191 aa).

Belongs to the copine family.

The polypeptide is Copine family protein 5 (cpna-5) (Caenorhabditis elegans).